A 316-amino-acid polypeptide reads, in one-letter code: Transaldolase (316 aa).

K125 functions as the Schiff-base intermediate with substrate in the catalytic mechanism.

Belongs to the transaldolase family. Type 1 subfamily. Homodimer.

The protein localises to the cytoplasm. The enzyme catalyses D-sedoheptulose 7-phosphate + D-glyceraldehyde 3-phosphate = D-erythrose 4-phosphate + beta-D-fructose 6-phosphate. It functions in the pathway carbohydrate degradation; pentose phosphate pathway; D-glyceraldehyde 3-phosphate and beta-D-fructose 6-phosphate from D-ribose 5-phosphate and D-xylulose 5-phosphate (non-oxidative stage): step 2/3. Transaldolase is important for the balance of metabolites in the pentose-phosphate pathway. The polypeptide is Transaldolase (Acidovorax sp. (strain JS42)).